A 308-amino-acid polypeptide reads, in one-letter code: Ribosomal RNA large subunit methyltransferase F (308 aa).

Belongs to the methyltransferase superfamily. METTL16/RlmF family.

It localises to the cytoplasm. It catalyses the reaction adenosine(1618) in 23S rRNA + S-adenosyl-L-methionine = N(6)-methyladenosine(1618) in 23S rRNA + S-adenosyl-L-homocysteine + H(+). Functionally, specifically methylates the adenine in position 1618 of 23S rRNA. This is Ribosomal RNA large subunit methyltransferase F from Shigella dysenteriae serotype 1 (strain Sd197).